The following is a 347-amino-acid chain: Probable nitronate monooxygenase (347 aa).

Residues asparagine 69, glutamine 171, glycine 176, glycine 213, and 232–235 (QIGS) contribute to the FMN site.

It belongs to the nitronate monooxygenase family. NMO class I subfamily. The cofactor is FMN.

The enzyme catalyses 3 propionate 3-nitronate + 3 O2 + H2O = 3 3-oxopropanoate + 2 nitrate + nitrite + H2O2 + 3 H(+). Nitronate monooxygenase that uses molecular oxygen to catalyze the oxidative denitrification of alkyl nitronates. Acts on propionate 3-nitronate (P3N), the presumed physiological substrate. Probably functions in the detoxification of P3N, a metabolic poison produced by plants and fungi as a defense mechanism. The chain is Probable nitronate monooxygenase (yrpB) from Bacillus subtilis (strain 168).